We begin with the raw amino-acid sequence, 640 residues long: Probable potassium transport system protein Kup 2 (640 aa).

Positions 1 to 20 (MTADIAATPAETPATNGHGD) are disordered. 12 helical membrane-spanning segments follow: residues 30 to 50 (LTLG…LYAL), 71 to 91 (VVSL…VVIL), 117 to 137 (ASII…DAVI), 155 to 175 (AAFD…LFAV), 183 to 203 (VAAF…IAAF), 224 to 244 (FMLH…LAVT), 265 to 285 (WLFV…ALVI), 294 to 314 (PFFL…ATVA), 363 to 383 (LLLV…ALAS), 385 to 405 (YGIS…VVIW), 410 to 430 (WSPI…LTFL), and 437 to 457 (VLEG…LMYT).

The protein belongs to the HAK/KUP transporter (TC 2.A.72) family.

The protein resides in the cell inner membrane. The enzyme catalyses K(+)(in) + H(+)(in) = K(+)(out) + H(+)(out). Functionally, transport of potassium into the cell. Likely operates as a K(+):H(+) symporter. The sequence is that of Probable potassium transport system protein Kup 2 from Bradyrhizobium sp. (strain ORS 278).